Consider the following 323-residue polypeptide: MSDLKMQRSGGEPLDTIKAYIALTKPRVIELLLVATIPTMLQAERGENNIVLILLTVFGGWMGAAAANTFNMVADSDIDQRMGRTRARPLVRHTVSNRDASIFAWVLTVASFLWLWLLCDSMLAGIFVLITIFFYIFVYTKWLKRRTHMNIVWGGAAGCMPVLVGWAVIVDQFEPGVPQQWWQAIVLFMVIFFWTPPHTWALAMKYREDYKAAGVPMLPVVRTPVQVTAQIVWYSVATVLTTFLLIPATGWIYAAIAVISGVTFLFMAIKLHLGIKNGGKVKPLKLFILSNNYLAVLFVALSVDAVLGLETIGEMLGWTTTFF.

8 consecutive transmembrane segments (helical) span residues 50–70 (IVLI…ANTF), 97–117 (NRDA…WLWL), 118–138 (LCDS…YIFV), 150–170 (NIVW…AVIV), 184–204 (AIVL…ALAM), 231–248 (IVWY…LIPA), 252–274 (IYAA…LHLG), and 293–313 (YLAV…ETIG).

Belongs to the UbiA prenyltransferase family. Protoheme IX farnesyltransferase subfamily.

It localises to the cell membrane. It carries out the reaction heme b + (2E,6E)-farnesyl diphosphate + H2O = Fe(II)-heme o + diphosphate. It functions in the pathway porphyrin-containing compound metabolism; heme O biosynthesis; heme O from protoheme: step 1/1. Converts heme B (protoheme IX) to heme O by substitution of the vinyl group on carbon 2 of heme B porphyrin ring with a hydroxyethyl farnesyl side group. The polypeptide is Protoheme IX farnesyltransferase (Corynebacterium glutamicum (strain R)).